Consider the following 71-residue polypeptide: Conotoxin Lt11.3 (71 aa).

The first 26 residues, 1 to 26 (MMFRLTSVGCILLVIAFLNLVGLTNA), serve as a signal peptide directing secretion. 4 cysteine pairs are disulfide-bonded: Cys27–Cys41, Cys34–Cys46, Cys40–Cys50, and Cys45–Cys54. The residue at position 57 (Pro57) is a Proline amide. Residues 61–71 (TRLQGFFKHRR) constitute a propeptide that is removed on maturation.

It belongs to the conotoxin I2 superfamily. As to expression, expressed by the venom duct.

It localises to the secreted. Its function is as follows. Probable neurotoxin. This Conus litteratus (Lettered cone) protein is Conotoxin Lt11.3.